The following is a 49-amino-acid chain: Large ribosomal subunit protein bL33 (49 aa).

The protein belongs to the bacterial ribosomal protein bL33 family.

This Clostridium beijerinckii (strain ATCC 51743 / NCIMB 8052) (Clostridium acetobutylicum) protein is Large ribosomal subunit protein bL33.